The chain runs to 289 residues: Mas-related G-protein coupled receptor member G (289 aa).

Residues 1-13 (MLSIFNIWGTFNR) are Extracellular-facing. A helical transmembrane segment spans residues 14-34 (VLFFLSLTVSLAGLAGNTLLL). At 35 to 49 (WHLGLRIKKGPFNTY) the chain is on the cytoplasmic side. A helical transmembrane segment spans residues 50 to 70 (LLHLAAADFLFLSCQVGFSIA). Residues 71 to 80 (KIASGYEDTL) are Extracellular-facing. Residues 81 to 101 (YFPVTFLWFAVGLWLLAAFIV) traverse the membrane as a helical segment. Over 102–123 (DCCLSYMFPSFCGPNCRPRYTS) the chain is Cytoplasmic. The helical transmembrane segment at 124-144 (FVLCLVIWALTMLAVLLPANA) threads the bilayer. Over 145–164 (CGLLYNRMSLLVCLKYHWVS) the chain is Extracellular. The helical transmembrane segment at 165–185 (VVWLGVLASTACGASMFLLVF) threads the bilayer. The Cytoplasmic portion of the chain corresponds to 186–200 (GNCCSSQPPSKFCKL). A helical transmembrane segment spans residues 201 to 221 (AQCSGILLFFCRLPLVFYWCL). A topological domain (extracellular) is located at residue Arg-222. Residues 223–243 (PVIKFLLPFFFPLATLLACID) form a helical membrane-spanning segment. Residues 244–289 (SSAKPLLYYLKGRQLRKEPLQVALNRALGEESQSSSGGISLPMSRV) are Cytoplasmic-facing.

The protein belongs to the G-protein coupled receptor 1 family. Mas subfamily.

It is found in the cell membrane. In terms of biological role, orphan receptor. May regulate nociceptor function and/or development, including the sensation or modulation of pain. In Rattus norvegicus (Rat), this protein is Mas-related G-protein coupled receptor member G (Mrgprg).